Here is a 789-residue protein sequence, read N- to C-terminus: uncharacterized protein (789 aa).

Disordered regions lie at residues 107 to 326 (YQQD…NNNN), 426 to 491 (MLKS…NNNN), 523 to 625 (SVNF…ISNN), 666 to 751 (THTF…KGNN), and 765 to 789 (PTRF…YNQH). Over residues 113-123 (NNTDDEQEQEQ) the composition is skewed to acidic residues. Composition is skewed to low complexity over residues 124-141 (EQQQ…TPIK), 151-194 (TSQT…ITPI), 201-213 (SIST…LRSS), and 225-270 (TSST…THNS). Acidic residues predominate over residues 274–290 (IDDDDGDNNDEINDEND). 2 stretches are compositionally biased toward low complexity: residues 291-326 (INSN…NNNN) and 429-491 (SNNS…NNNN). The segment covering 523-549 (SVNFDRNQNQKSPFLNNTSMPNINFNE) has biased composition (polar residues). Low complexity-rich tracts occupy residues 550–581 (QSQQ…SINY), 602–617 (TSGS…NNSK), 696–722 (HIMN…SGSN), and 766–789 (TRFN…YNQH).

This is an uncharacterized protein from Dictyostelium discoideum (Social amoeba).